The following is a 496-amino-acid chain: Lysine--tRNA ligase (496 aa).

Mg(2+)-binding residues include E409 and E416.

Belongs to the class-II aminoacyl-tRNA synthetase family. Homodimer. Requires Mg(2+) as cofactor.

The protein localises to the cytoplasm. It carries out the reaction tRNA(Lys) + L-lysine + ATP = L-lysyl-tRNA(Lys) + AMP + diphosphate. The sequence is that of Lysine--tRNA ligase from Streptococcus thermophilus (strain ATCC BAA-491 / LMD-9).